A 1462-amino-acid chain; its full sequence is Gag-Pro-Pol polyprotein (1462 aa).

G2 carries the N-myristoyl glycine; by host lipid modification. Residues 93 to 144 are disordered; that stretch reads QIPSRPAPPPPSSPTHDPPDSDPQIPPPYVEPTAPQVLPVMHPHGAPPNHRP. At S105 the chain carries Phosphoserine; by host MAPK1. Residues 118–121 carry the PPXY motif motif; that stretch reads PPPY. Positions 124–127 match the PTAP/PSAP motif motif; that stretch reads PTAP. 2 consecutive CCHC-type zinc fingers follow at residues 355–372 and 378–395; these read QPCFRCGKAGHWSRDCTQ and GPCPLCQDPTHWKRDCPR. Positions 476–554 constitute a Peptidase A2 domain; it reads IEALLDTGAD…NNWAIIGRDA (79 aa). The active-site For protease activity; shared with dimeric partner is D481. The 191-residue stretch at 614–804 folds into the Reverse transcriptase domain; that stretch reads LEAGHIEPYT…GTIKFLGQII (191 aa). Residues D680, D755, D756, D1040, E1074, D1096, D1157, D1230, and D1287 each coordinate Mg(2+). In terms of domain architecture, RNase H type-1 spans 1031-1165; it reads INTAPCLFSD…TDALLITPVL (135 aa). Residues 1219 to 1388 enclose the Integrase catalytic domain; the sequence is RGLLPNHIWQ…QPIPETRSLS (170 aa). A DNA-binding region (integrase-type) is located at residues 1393–1443; it reads HWYYFKLPGLNSRQWKGPQEALQEAAGAALIPVSASSAQWIPWRLLKRAAC.

In terms of assembly, homodimer; the homodimers are part of the immature particles. Interacts with human TSG101 and NEDD4; these interactions are essential for budding and release of viral particles. Homodimer; further assembles as homohexamers. Requires Mg(2+) as cofactor. Post-translationally, phosphorylation of the matrix protein p19 by MAPK1 seems to play a role in budding. Myristoylated. Myristoylation of the matrix (MA) domain mediates the transport and binding of Gag polyproteins to the host plasma membrane and is required for the assembly of viral particles. In terms of processing, specific enzymatic cleavages by the viral protease yield mature proteins. The polyprotein is cleaved during and after budding, this process is termed maturation. The protease is autoproteolytically processed at its N- and C-termini.

It is found in the virion. The enzyme catalyses Endonucleolytic cleavage to 5'-phosphomonoester.. It catalyses the reaction DNA(n) + a 2'-deoxyribonucleoside 5'-triphosphate = DNA(n+1) + diphosphate. The matrix domain targets Gag, Gag-Pro and Gag-Pro-Pol polyproteins to the plasma membrane via a multipartite membrane binding signal, that includes its myristoylated N-terminus. Functionally, matrix protein. In terms of biological role, forms the spherical core of the virus that encapsulates the genomic RNA-nucleocapsid complex. Its function is as follows. Binds strongly to viral nucleic acids and promote their aggregation. Also destabilizes the nucleic acids duplexes via highly structured zinc-binding motifs. The aspartyl protease mediates proteolytic cleavages of Gag and Gag-Pol polyproteins during or shortly after the release of the virion from the plasma membrane. Cleavages take place as an ordered, step-wise cascade to yield mature proteins. This process is called maturation. Displays maximal activity during the budding process just prior to particle release from the cell. Cleaves the translation initiation factor eIF4G leading to the inhibition of host cap-dependent translation. Functionally, RT is a multifunctional enzyme that converts the viral RNA genome into dsDNA in the cytoplasm, shortly after virus entry into the cell. This enzyme displays a DNA polymerase activity that can copy either DNA or RNA templates, and a ribonuclease H (RNase H) activity that cleaves the RNA strand of RNA-DNA heteroduplexes in a partially processive 3' to 5'-endonucleasic mode. Conversion of viral genomic RNA into dsDNA requires many steps. A tRNA-Pro binds to the primer-binding site (PBS) situated at the 5'-end of the viral RNA. RT uses the 3' end of the tRNA primer to perform a short round of RNA-dependent minus-strand DNA synthesis. The reading proceeds through the U5 region and ends after the repeated (R) region which is present at both ends of viral RNA. The portion of the RNA-DNA heteroduplex is digested by the RNase H, resulting in a ssDNA product attached to the tRNA primer. This ssDNA/tRNA hybridizes with the identical R region situated at the 3' end of viral RNA. This template exchange, known as minus-strand DNA strong stop transfer, can be either intra- or intermolecular. RT uses the 3' end of this newly synthesized short ssDNA to perform the RNA-dependent minus-strand DNA synthesis of the whole template. RNase H digests the RNA template except for a polypurine tract (PPT) situated at the 5' end of the genome. It is not clear if both polymerase and RNase H activities are simultaneous. RNase H probably can proceed both in a polymerase-dependent (RNA cut into small fragments by the same RT performing DNA synthesis) and a polymerase-independent mode (cleavage of remaining RNA fragments by free RTs). Secondly, RT performs DNA-directed plus-strand DNA synthesis using the PPT that has not been removed by RNase H as primer. PPT and tRNA primers are then removed by RNase H. The 3' and 5' ssDNA PBS regions hybridize to form a circular dsDNA intermediate. Strand displacement synthesis by RT to the PBS and PPT ends produces a blunt ended, linear dsDNA copy of the viral genome that includes long terminal repeats (LTRs) at both ends. In terms of biological role, catalyzes viral DNA integration into the host chromosome, by performing a series of DNA cutting and joining reactions. This Homo sapiens (Human) protein is Gag-Pro-Pol polyprotein (gag-pro-pol).